A 24-amino-acid chain; its full sequence is Lycosin-I (24 aa).

It belongs to the cationic peptide 04 (cupiennin) family. 05 subfamily. In terms of assembly, monomer in solution. Small size oligomers on the lipid membranes.

It localises to the secreted. The protein localises to the target cell membrane. In terms of biological role, antimicrobial peptide that inhibits many reference strains of bacteria and fungi. Is potent against Candida species and multidrug-resistant Acinetobacter baumannii (MDRAB). Is probably localized in the cytoplasm after being transported through the cell wall and membrane. Is able to interact with cell membranes and enter into cell plasma to activate the mitochondrial death pathway to sensitize cancer cells for apoptosis, as well as up-regulates p27 to inhibit cell proliferation. It shows very low effect on normal cells, such as erythrocytes, Hek293t cells. It also potently inhibits tumor cell growth in vitro, and suppresses various tumor growth in vivo when tested in human cancer xenograft models. It interacts with the cell membrane and is then internalized into the cytoplasm of cancer cells to initiate the programmable cell death. In addition, this peptide has the therapeutic effects of anti-hypertension by endothelium-dependent vasodilatation via the NO/sGC/cGMP signaling pathway. In vivo, this peptide also shows a significant ability to inhibit T.gondii invasion and proliferation, making it a potential alternative agent for the treatment of toxoplasmosis. The protein is Lycosin-I of Lycosa singoriensis (Wolf spider).